The chain runs to 156 residues: Probable cyclic pyranopterin monophosphate synthase (156 aa).

Residues 74-76 and 110-111 each bind substrate; these read LCH and ME. Residue Asp125 is part of the active site.

The protein belongs to the MoaC family. Homohexamer; trimer of dimers.

The enzyme catalyses (8S)-3',8-cyclo-7,8-dihydroguanosine 5'-triphosphate = cyclic pyranopterin phosphate + diphosphate. Its pathway is cofactor biosynthesis; molybdopterin biosynthesis. In terms of biological role, catalyzes the conversion of (8S)-3',8-cyclo-7,8-dihydroguanosine 5'-triphosphate to cyclic pyranopterin monophosphate (cPMP). The polypeptide is Probable cyclic pyranopterin monophosphate synthase (Thermococcus kodakarensis (strain ATCC BAA-918 / JCM 12380 / KOD1) (Pyrococcus kodakaraensis (strain KOD1))).